The chain runs to 631 residues: Transcription factor dibT (631 aa).

The zn(2)-C6 fungal-type DNA-binding region spans cysteine 11–cysteine 38. Positions serine 123–serine 144 are enriched in low complexity. 2 disordered regions span residues serine 123–arginine 148 and glycine 469–glycine 488.

It localises to the nucleus. Functionally, transcription factor; part of the gene cluster that mediates the biosynthesis of pestalotiollide B which is part of dibenzodioxocinones, a novel class of inhibitors against cholesterol ester transfer protein (CEPT). Acts as the key transcription factor within the cluster and positively regulates the expression of the cluster genes and the subsequent production of dibenzodioxocinones such as pestalotiollide B, pestalotiollide C, 1',2'-dehydropenicillide, 3'-methoxy-1',2'-dehydropenicillide and 1',2'-epoxy-3',4'-didehydropenicillide. Required for the expression of most PKS genes outside of the dibenzodioxocinones cluster, (43 out of 48 defined PKS genes), and promotes pigmentation of the mycelium and conidia. The protein is Transcription factor dibT of Pestalotiopsis microspora.